The primary structure comprises 267 residues: Diphthine--ammonia ligase (267 aa).

Tyrosine 97 bears the Phosphotyrosine mark.

The protein belongs to the Diphthine--ammonia ligase family.

It carries out the reaction diphthine-[translation elongation factor 2] + NH4(+) + ATP = diphthamide-[translation elongation factor 2] + AMP + diphosphate + H(+). It participates in protein modification; peptidyl-diphthamide biosynthesis. Amidase that catalyzes the last step of diphthamide biosynthesis using ammonium and ATP. Diphthamide biosynthesis consists in the conversion of an L-histidine residue in the translation elongation factor 2 (EEF2) to diphthamide. The protein is Diphthine--ammonia ligase (Dph6) of Mus musculus (Mouse).